The chain runs to 398 residues: Probable aminomethyltransferase (398 aa).

The protein belongs to the GcvT family. As to quaternary structure, the glycine cleavage system is composed of four proteins: P, T, L and H.

The catalysed reaction is N(6)-[(R)-S(8)-aminomethyldihydrolipoyl]-L-lysyl-[protein] + (6S)-5,6,7,8-tetrahydrofolate = N(6)-[(R)-dihydrolipoyl]-L-lysyl-[protein] + (6R)-5,10-methylene-5,6,7,8-tetrahydrofolate + NH4(+). The glycine cleavage system catalyzes the degradation of glycine. This chain is Probable aminomethyltransferase, found in Thermococcus gammatolerans (strain DSM 15229 / JCM 11827 / EJ3).